A 145-amino-acid chain; its full sequence is Large ribosomal subunit protein uL14m (145 aa).

Residues 1-30 (MAFSSGLWGPCVHMSRAFSQRCFSTTGSLG) constitute a mitochondrion transit peptide.

This sequence belongs to the universal ribosomal protein uL14 family. As to quaternary structure, component of the mitochondrial ribosome large subunit (39S) which comprises a 16S rRNA and about 50 distinct proteins. Interacts with MALSU1.

The protein resides in the mitochondrion. Its function is as follows. May form part of 2 intersubunit bridges in the assembled ribosome. Upon binding to MALSU1, intersubunit bridge formation is blocked, preventing ribosome formation and repressing translation. This chain is Large ribosomal subunit protein uL14m (MRPL14), found in Bos taurus (Bovine).